The chain runs to 242 residues: Zinc-finger homeodomain protein 13 (242 aa).

The ZF-HD dimerization-type; degenerate zinc-finger motif lies at 64–111 (YYECRKNHAADIGTTAYDGCGEFVSSTGEEDSLNCAACGCHRNFHREE). The tract at residues 144 to 166 (GGKSEGKKKKKEKESYGGDPIIK) is disordered. Residues 155 to 166 (EKESYGGDPIIK) show a composition bias toward basic and acidic residues. Positions 179–238 (VKRLKTKFTAEQTEKMRDYAEKLRWKVRPERQEEVEEFCVEIGVNRKNFRIWMNNHKDKI) form a DNA-binding region, homeobox.

As to quaternary structure, homo- and heterodimer with other ZFHD proteins. Interacts with MIF1, MIF2 and MIF3; these interactions prevent nuclear localization and DNA-binding to inhibit transcription regulation activity. Binds to ZHD11. Mostly expressed in flowers.

It is found in the nucleus. Putative transcription factor. The polypeptide is Zinc-finger homeodomain protein 13 (ZHD13) (Arabidopsis thaliana (Mouse-ear cress)).